Here is a 332-residue protein sequence, read N- to C-terminus: Holliday junction branch migration complex subunit RuvB (332 aa).

The large ATPase domain (RuvB-L) stretch occupies residues 1–181 (MTRFLDSDAM…FGITGHMEYY (181 aa)). ATP-binding positions include Leu20, Arg21, Gly62, Lys65, Thr66, Thr67, 128 to 130 (EDF), Arg171, Tyr181, and Arg218. Thr66 contributes to the Mg(2+) binding site. The small ATPAse domain (RuvB-S) stretch occupies residues 182 to 252 (EENDLTEIIE…ITDKALTMLD (71 aa)). The tract at residues 255 to 332 (HEGLDYVDQK…EHLGYQRFDK (78 aa)) is head domain (RuvB-H). Positions 291, 310, 312, and 315 each coordinate DNA.

The protein belongs to the RuvB family. Homohexamer. Forms an RuvA(8)-RuvB(12)-Holliday junction (HJ) complex. HJ DNA is sandwiched between 2 RuvA tetramers; dsDNA enters through RuvA and exits via RuvB. An RuvB hexamer assembles on each DNA strand where it exits the tetramer. Each RuvB hexamer is contacted by two RuvA subunits (via domain III) on 2 adjacent RuvB subunits; this complex drives branch migration. In the full resolvosome a probable DNA-RuvA(4)-RuvB(12)-RuvC(2) complex forms which resolves the HJ.

It is found in the cytoplasm. It carries out the reaction ATP + H2O = ADP + phosphate + H(+). The RuvA-RuvB-RuvC complex processes Holliday junction (HJ) DNA during genetic recombination and DNA repair, while the RuvA-RuvB complex plays an important role in the rescue of blocked DNA replication forks via replication fork reversal (RFR). RuvA specifically binds to HJ cruciform DNA, conferring on it an open structure. The RuvB hexamer acts as an ATP-dependent pump, pulling dsDNA into and through the RuvAB complex. RuvB forms 2 homohexamers on either side of HJ DNA bound by 1 or 2 RuvA tetramers; 4 subunits per hexamer contact DNA at a time. Coordinated motions by a converter formed by DNA-disengaged RuvB subunits stimulates ATP hydrolysis and nucleotide exchange. Immobilization of the converter enables RuvB to convert the ATP-contained energy into a lever motion, pulling 2 nucleotides of DNA out of the RuvA tetramer per ATP hydrolyzed, thus driving DNA branch migration. The RuvB motors rotate together with the DNA substrate, which together with the progressing nucleotide cycle form the mechanistic basis for DNA recombination by continuous HJ branch migration. Branch migration allows RuvC to scan DNA until it finds its consensus sequence, where it cleaves and resolves cruciform DNA. The protein is Holliday junction branch migration complex subunit RuvB of Streptococcus agalactiae serotype Ia (strain ATCC 27591 / A909 / CDC SS700).